The chain runs to 490 residues: Bifunctional protein HldE (490 aa).

Positions 1–330 (MLDFEQLSPA…RKILPHAFLA (330 aa)) are ribokinase. 205–208 (NRKE) contributes to the ATP binding site. The active site involves aspartate 275. Residues 358–490 (FTNGCFDILH…LVARAQNGKS (133 aa)) are cytidylyltransferase.

The protein in the N-terminal section; belongs to the carbohydrate kinase PfkB family. In the C-terminal section; belongs to the cytidylyltransferase family. As to quaternary structure, homodimer.

The enzyme catalyses D-glycero-beta-D-manno-heptose 7-phosphate + ATP = D-glycero-beta-D-manno-heptose 1,7-bisphosphate + ADP + H(+). The catalysed reaction is D-glycero-beta-D-manno-heptose 1-phosphate + ATP + H(+) = ADP-D-glycero-beta-D-manno-heptose + diphosphate. It functions in the pathway nucleotide-sugar biosynthesis; ADP-L-glycero-beta-D-manno-heptose biosynthesis; ADP-L-glycero-beta-D-manno-heptose from D-glycero-beta-D-manno-heptose 7-phosphate: step 1/4. Its pathway is nucleotide-sugar biosynthesis; ADP-L-glycero-beta-D-manno-heptose biosynthesis; ADP-L-glycero-beta-D-manno-heptose from D-glycero-beta-D-manno-heptose 7-phosphate: step 3/4. In terms of biological role, catalyzes the phosphorylation of D-glycero-D-manno-heptose 7-phosphate at the C-1 position to selectively form D-glycero-beta-D-manno-heptose-1,7-bisphosphate. Catalyzes the ADP transfer from ATP to D-glycero-beta-D-manno-heptose 1-phosphate, yielding ADP-D-glycero-beta-D-manno-heptose. The chain is Bifunctional protein HldE from Rhodopseudomonas palustris (strain BisA53).